Here is a 286-residue protein sequence, read N- to C-terminus: Putative quercetin 2,3-dioxygenase PA2418 (286 aa).

A divalent metal cation-binding residues include His-61, His-63, His-105, and Glu-107.

It belongs to the pirin family. The cofactor is a divalent metal cation.

The enzyme catalyses quercetin + O2 = 2-(3,4-dihydroxybenzoyloxy)-4,6-dihydroxybenzoate + CO. It participates in flavonoid metabolism; quercetin degradation. In terms of biological role, putative quercetin 2,3-dioxygenase. In Pseudomonas aeruginosa (strain ATCC 15692 / DSM 22644 / CIP 104116 / JCM 14847 / LMG 12228 / 1C / PRS 101 / PAO1), this protein is Putative quercetin 2,3-dioxygenase PA2418.